A 642-amino-acid chain; its full sequence is Threonine--tRNA ligase (642 aa).

The TGS domain maps to 1-61 (MPIITLPDGS…EADASLAIIT (61 aa)). The tract at residues 243-534 (DHRKIGKQLD…LTEEYAGLFP (292 aa)) is catalytic. Zn(2+) is bound by residues cysteine 334, histidine 385, and histidine 511.

This sequence belongs to the class-II aminoacyl-tRNA synthetase family. As to quaternary structure, homodimer. It depends on Zn(2+) as a cofactor.

The protein resides in the cytoplasm. The catalysed reaction is tRNA(Thr) + L-threonine + ATP = L-threonyl-tRNA(Thr) + AMP + diphosphate + H(+). Catalyzes the attachment of threonine to tRNA(Thr) in a two-step reaction: L-threonine is first activated by ATP to form Thr-AMP and then transferred to the acceptor end of tRNA(Thr). Also edits incorrectly charged L-seryl-tRNA(Thr). The sequence is that of Threonine--tRNA ligase from Aeromonas hydrophila subsp. hydrophila (strain ATCC 7966 / DSM 30187 / BCRC 13018 / CCUG 14551 / JCM 1027 / KCTC 2358 / NCIMB 9240 / NCTC 8049).